The chain runs to 331 residues: Minor capsid protein A1 (331 aa).

It is found in the virion. Its function is as follows. Minor capsid protein. The protein is Minor capsid protein A1 of Escherichia coli (Bacteriophage SP).